Consider the following 513-residue polypeptide: Probable WRKY transcription factor 3 (513 aa).

The segment covering 1-11 (MAEKEEKEPSK) has biased composition (basic and acidic residues). Disordered regions lie at residues 1–26 (MAEK…ISLP), 175–281 (NVHM…PACP), and 297–394 (IIYK…VASS). The segment covering 179 to 201 (QQSQQSEYPSSTQQQQQQQQQAS) has biased composition (low complexity). The span at 202-228 (LTEIPSFSSAPRSQIRASVQETSQGQR) shows a compositional bias: polar residues. Positions 229–240 (ETSEISVFEHRS) are enriched in basic and acidic residues. A DNA-binding region (WRKY 1) is located at residues 244-308 (NADKPADDGY…YKGQHNHELP (65 aa)). 2 stretches are compositionally biased toward polar residues: residues 311-335 (RGNN…SSLN) and 343-355 (TSQV…MSEA). Over residues 368 to 387 (VGERHEDEPDPKRRNTEVRV) the composition is skewed to basic and acidic residues. The segment at residues 409-474 (SEVDLLDDGY…YEGKHNHDVP (66 aa)) is a DNA-binding region (WRKY 2).

In terms of tissue distribution, in young, mature and senescent leaves.

The protein resides in the nucleus. Transcription factor. Interacts specifically with the W box (5'-(T)TGAC[CT]-3'), a frequently occurring elicitor-responsive cis-acting element. The sequence is that of Probable WRKY transcription factor 3 (WRKY3) from Arabidopsis thaliana (Mouse-ear cress).